The following is a 322-amino-acid chain: Cysteine protease YopT (322 aa).

Active-site residues include C139, H258, and D274.

The protein belongs to the peptidase C58 family. As to quaternary structure, interacts with human ARHA.

Its subcellular location is the secreted. Its function is as follows. Cysteine protease, which is translocated into infected cells and plays a central role in pathogenesis by cleaving the C-terminus end of the human small GTPase RhoA/ARHA, a regulator of cytoskeleton. Once cleaved, ARHA loses its lipid modification, and is released from the cell membrane, leading to the subsequent disruption of actin cytoskeleton of the host cell. The protein is Cysteine protease YopT (yopT) of Yersinia pestis.